The sequence spans 399 residues: Yellow-related salivary protein M10 (399 aa).

A signal peptide spans 1–18 (MKFILSVLALASFQHVFC). Residues Asn29 and Asn83 are each glycosylated (N-linked (GlcNAc...) asparagine).

Belongs to the major royal jelly protein family. Salivary gland (at protein level).

It is found in the secreted. Probably modulates blood feeding of sand flies on vertebrate species by binding and sequestering different mediators involved in the host response. Functions as a chemoattractant for host neutrophils; likely acts through a G-protein-coupled receptor and effect is dependent on calcium influx and phosphatidylinositol 3-kinases (PI3K) activity. In terms of biological role, (Microbial infection) Probably enhances infection caused by Leishmania species in the host through augmentation of host neutrophil recruitment into the skin. This chain is Yellow-related salivary protein M10, found in Phlebotomus duboscqi (Sandfly).